The primary structure comprises 447 residues: MRVVLAGTGSAVGKTTIATGIMKALSGRGVQPFKVGPDYIDPSYHTMATGNTSRNIDSFFMTEAQIREAFTRAMKLSGSRMGIIEGVRGLYEGISPIGDTGSTASVAKALDAPVVLIINSRSLVKSAAAMVLGFRSLDREVKIEGVILNQVKNRRHYLKTRRAVEELTGTAVIGGIPRSSELEVEQRHLGLVPAVERDTIAAQIEKWGLAMEEYIDLEALQDIMSSAGKIRGERQPLWQRGNRKRVRIGVAIDEAFNFYYQENIEALEDNAASVVPFSPIHDEELPDVDAVYIGGGYPEIFAAELESNTSMRKSIQRFHADGRPIFGECGGLMYLMSSIDEREMCGVFPHPAEMTGRVQGLSYVIAEAVMDNLITEAGDKFRGHEFHYSRVLGASGGKFAFRVLRGRGIVDSLDGITSGSSLASYIHIHAASCPQFAANFTRNAWEF.

The region spanning 247–435 (RIGVAIDEAF…IHIHAASCPQ (189 aa)) is the GATase cobBQ-type domain. The Nucleophile role is filled by C329.

It belongs to the CobB/CbiA family. It depends on Mg(2+) as a cofactor.

It catalyses the reaction cob(II)yrinate + 2 L-glutamine + 2 ATP + 2 H2O = cob(II)yrinate a,c diamide + 2 L-glutamate + 2 ADP + 2 phosphate + 2 H(+). The catalysed reaction is Ni-sirohydrochlorin + 2 L-glutamine + 2 ATP + 2 H2O = Ni-sirohydrochlorin a,c-diamide + 2 L-glutamate + 2 ADP + 2 phosphate + 2 H(+). Its pathway is cofactor biosynthesis; adenosylcobalamin biosynthesis; cob(II)yrinate a,c-diamide from sirohydrochlorin (anaerobic route): step 10/10. Functionally, catalyzes the ATP-dependent amidation of the two carboxylate groups at positions a and c of cobyrinate, using either L-glutamine or ammonia as the nitrogen source. Involved in the biosynthesis of the unique nickel-containing tetrapyrrole coenzyme F430, the prosthetic group of methyl-coenzyme M reductase (MCR), which plays a key role in methanogenesis and anaerobic methane oxidation. Catalyzes the ATP-dependent amidation of the two carboxylate groups at positions a and c of Ni-sirohydrochlorin, using L-glutamine or ammonia as the nitrogen source. This chain is Cobyrinate a,c-diamide synthase, found in Methanothermobacter thermautotrophicus (strain ATCC 29096 / DSM 1053 / JCM 10044 / NBRC 100330 / Delta H) (Methanobacterium thermoautotrophicum).